Here is a 442-residue protein sequence, read N- to C-terminus: Histidine--tRNA ligase (442 aa).

It belongs to the class-II aminoacyl-tRNA synthetase family. In terms of assembly, homodimer.

The protein localises to the cytoplasm. The enzyme catalyses tRNA(His) + L-histidine + ATP = L-histidyl-tRNA(His) + AMP + diphosphate + H(+). The polypeptide is Histidine--tRNA ligase (Helicobacter pylori (strain P12)).